A 258-amino-acid chain; its full sequence is F-box/SPRY domain-containing protein 1 (258 aa).

Positions 6–54 (TEYAPDIPDNVLELIFSYLKLQDLRNCSLVCKSWNRFLNDENNEVWRAQ) constitute an F-box domain. Positions 64-256 (FKTDLLSVVP…ISMVYLGPPL (193 aa)) constitute a B30.2/SPRY domain.

This sequence belongs to the FBXO45/Fsn family. Component of an E3 ubiquitin ligase complex composed of hiw and Fsn.

The protein localises to the synapse. The protein operates within protein modification; protein ubiquitination. In terms of biological role, required in the presynaptic motoneuron to down-regulate the levels of wnd and restrain synaptic terminal growth at the neuromuscular junction (NMJ). This chain is F-box/SPRY domain-containing protein 1, found in Aedes aegypti (Yellowfever mosquito).